The primary structure comprises 522 residues: DEP domain-containing protein 7 (522 aa).

Positions leucine 46–asparagine 138 constitute a DEP domain.

Belongs to the DEPDC7 family.

This is DEP domain-containing protein 7 (depdc7) from Xenopus laevis (African clawed frog).